Here is an 85-residue protein sequence, read N- to C-terminus: Protein Vpu (85 aa).

The Extracellular portion of the chain corresponds to 1–7; the sequence is MHHRDLL. The helical transmembrane segment at 8-28 threads the bilayer; that stretch reads AIIIISALLFINVILWGFILR. Topologically, residues 29-85 are cytoplasmic; sequence KYLEQKEQDRKEREILERLRRIREIRDDSDYESNGEEEQEVMDLVLSHGFDNPMFEP.

It belongs to the HIV-1 VPU protein family. In terms of assembly, homopentamer. Interacts with host CD4 and BRTC; these interactions induce proteasomal degradation of CD4. Interacts with host BST2; this interaction leads to the degradation of host BST2. Interacts with host FBXW11. Interacts with host AP1M1; this interaction plays a role in the mistrafficking and subsequent degradation of host BST2. Interacts with host RANBP2; this interaction allows Vpu to down-regulate host BLM sumoylation. Post-translationally, phosphorylated by host CK2. This phosphorylation is necessary for interaction with human BTRC and degradation of CD4.

It localises to the host membrane. Ion channel activity is inhibited by hexamethylene amiloride in vitro. Enhances virion budding by targeting host CD4 and Tetherin/BST2 to proteasome degradation. Degradation of CD4 prevents any unwanted premature interactions between viral Env and its host receptor CD4 in the endoplasmic reticulum. Degradation of antiretroviral protein Tetherin/BST2 is important for virion budding, as BST2 tethers new viral particles to the host cell membrane. Mechanistically, Vpu bridges either CD4 or BST2 to BTRC, a substrate recognition subunit of the Skp1/Cullin/F-box protein E3 ubiquitin ligase, induces their ubiquitination and subsequent proteasomal degradation. The alteration of the E3 ligase specificity by Vpu seems to promote the degradation of host IKBKB, leading to NF-kappa-B down-regulation and subsequent apoptosis. Acts as a viroporin that forms an oligomeric ion channel in membranes. Modulates the host DNA repair mechanisms to promote degradation of nuclear viral cDNA in cells that are already productively infected in order to suppress immune sensing and proviral hyper-integration (superinfection). Manipulates PML-NBs and modulates SUMOylation of host BLM protein thereby enhancing its DNA-end processing activity toward viral unintegrated linear DNA. Also inhibits RAD52-mediated homologous repair of viral cDNA, preventing the generation of dead-end circular forms of single copies of the long terminal repeat and permitting sustained nucleolytic attack. The sequence is that of Protein Vpu from Human immunodeficiency virus type 1 group O (isolate ANT70) (HIV-1).